The chain runs to 258 residues: Archaerhodopsin-3 (258 aa).

A propeptide spanning residues 1-6 is cleaved from the precursor; it reads MDPIAL. At Gln-7 the chain carries Pyrrolidone carboxylic acid. The Extracellular segment spans residues 7-18; the sequence is QAGYDLLGDGRP. The chain crosses the membrane as a helical span at residues 19 to 40; that stretch reads ETLWLGIGTLLMLIGTFYFLVR. The Cytoplasmic portion of the chain corresponds to 41–49; sequence GWGVTDKDA. Residues 50-71 form a helical membrane-spanning segment; that stretch reads REYYAVTILVPGIASAAYLSMF. The Extracellular segment spans residues 72–89; that stretch reads FGIGLTEVTVGGEMLDIY. The chain crosses the membrane as a helical span at residues 90–111; the sequence is YARYADWLFTTPLLLLDLALLA. The Cytoplasmic portion of the chain corresponds to 112 to 114; sequence KVD. The chain crosses the membrane as a helical span at residues 115 to 137; sequence RVTIGTLVGVDALMIVTGLIGAL. Residues 138–141 lie on the Extracellular side of the membrane; the sequence is SHTA. A helical transmembrane segment spans residues 142–170; it reads IARYSWWLFSTICMIVVLYFLATSLRSAA. Topologically, residues 171–173 are cytoplasmic; it reads KER. The helical transmembrane segment at 174–202 threads the bilayer; sequence GPEVASTFNTLTALVLVLWTAYPILWIIG. The Extracellular segment spans residues 203-210; it reads TEGAGVVG. A helical transmembrane segment spans residues 211–243; it reads LGIETLLFMVLDVTAKVGFGFILLRSRAILGDT. Lys-226 bears the N6-(retinylidene)lysine mark. The Cytoplasmic portion of the chain corresponds to 244–258; sequence EAPEPSAGADVSAAD.

Belongs to the archaeal/bacterial/fungal opsin family.

The protein resides in the cell membrane. In terms of biological role, light-driven proton pump. This Halorubrum sodomense protein is Archaerhodopsin-3 (aop3).